Here is a 139-residue protein sequence, read N- to C-terminus: Large ribosomal subunit protein uL16 (139 aa).

The span at 1-17 (MLIPRRTKHRKQHHPRR) shows a compositional bias: basic residues. The tract at residues 1–24 (MLIPRRTKHRKQHHPRRTGAASGG) is disordered.

Belongs to the universal ribosomal protein uL16 family. In terms of assembly, part of the 50S ribosomal subunit.

Its function is as follows. Binds 23S rRNA and is also seen to make contacts with the A and possibly P site tRNAs. In Beutenbergia cavernae (strain ATCC BAA-8 / DSM 12333 / CCUG 43141 / JCM 11478 / NBRC 16432 / NCIMB 13614 / HKI 0122), this protein is Large ribosomal subunit protein uL16.